A 138-amino-acid polypeptide reads, in one-letter code: Histone H2AX (138 aa).

Positions 1 to 23 are disordered; that stretch reads MSTTGKGGKAKGKTASSKQVSRS. Ser-2 carries the N-acetylserine modification. Residues Lys-6, Lys-9, Lys-11, Lys-13, and Lys-18 each carry the N6-acetyllysine modification. Ser-123 is modified (phosphoserine). A Glycyl lysine isopeptide (Lys-Gly) (interchain with G-Cter in ubiquitin) cross-link involves residue Lys-124. Ser-125, Ser-130, and Ser-135 each carry phosphoserine. Residues 135 to 136 carry the [ST]-Q motif motif; that stretch reads SQ.

The protein belongs to the histone H2A family. The nucleosome is a histone octamer containing two molecules each of H2A, H2B, H3 and H4 assembled in one H3-H4 heterotetramer and two H2A-H2B heterodimers. The octamer wraps approximately 147 bp of DNA. Monoubiquitination of Lys-124 gives a specific tag for epigenetic transcriptional repression. In terms of processing, acetylation occurs almost exclusively in the MAC.

The protein localises to the nucleus. It localises to the chromosome. Functionally, core component of nucleosome. Nucleosomes wrap and compact DNA into chromatin, limiting DNA accessibility to the cellular machineries which require DNA as a template. Histones thereby play a central role in transcription regulation, DNA repair, DNA replication and chromosomal stability. DNA accessibility is regulated via a complex set of post-translational modifications of histones, also called histone code, and nucleosome remodeling. The chain is Histone H2AX (HTA1) from Tetrahymena pyriformis.